Reading from the N-terminus, the 112-residue chain is Probable 4-amino-4-deoxy-L-arabinose-phosphoundecaprenol flippase subunit ArnE (112 aa).

One can recognise an EamA domain in the interval 35 to 110 (RHILFWLGMA…IVVGIVILGT (76 aa)). Helical transmembrane passes span 37–57 (ILFW…LWLS), 66–86 (IAYP…WGIW), and 89–109 (PVAR…VILG).

This sequence belongs to the ArnE family. In terms of assembly, heterodimer of ArnE and ArnF.

Its subcellular location is the cell inner membrane. It functions in the pathway bacterial outer membrane biogenesis; lipopolysaccharide biosynthesis. Translocates 4-amino-4-deoxy-L-arabinose-phosphoundecaprenol (alpha-L-Ara4N-phosphoundecaprenol) from the cytoplasmic to the periplasmic side of the inner membrane. The chain is Probable 4-amino-4-deoxy-L-arabinose-phosphoundecaprenol flippase subunit ArnE from Klebsiella pneumoniae (strain 342).